Reading from the N-terminus, the 399-residue chain is Elongation factor Tu (399 aa).

One can recognise a tr-type G domain in the interval 10-207 (KPHVNVGTIG…ALDSYIPEPV (198 aa)). The interval 19-26 (GHIDHGKT) is G1. Position 19 to 26 (19 to 26 (GHIDHGKT)) interacts with GTP. Threonine 26 contributes to the Mg(2+) binding site. The interval 60-64 (GITIN) is G2. Residues 81–84 (DCPG) form a G3 region. Residues 81–85 (DCPGH) and 136–139 (NKVD) each bind GTP. The tract at residues 136–139 (NKVD) is G4. The segment at 174–176 (SAL) is G5.

The protein belongs to the TRAFAC class translation factor GTPase superfamily. Classic translation factor GTPase family. EF-Tu/EF-1A subfamily. In terms of assembly, monomer.

Its subcellular location is the cytoplasm. The catalysed reaction is GTP + H2O = GDP + phosphate + H(+). Its function is as follows. GTP hydrolase that promotes the GTP-dependent binding of aminoacyl-tRNA to the A-site of ribosomes during protein biosynthesis. This is Elongation factor Tu from Pseudothermotoga lettingae (strain ATCC BAA-301 / DSM 14385 / NBRC 107922 / TMO) (Thermotoga lettingae).